We begin with the raw amino-acid sequence, 576 residues long: High-affinity choline transporter 1 (576 aa).

Residues 6–26 (GIVAIVFFYVLILVVGIWAGR) traverse the membrane as a helical segment. Topologically, residues 27–51 (KSKSSKELESEAGAATEEVMLAGRN) are cytoplasmic. Residues 52 to 72 (IGTLVGIFTMTATWVGGAYIN) form a helical membrane-spanning segment. Topologically, residues 73–82 (GTAEALYNGG) are extracellular. The chain crosses the membrane as a helical span at residues 83–103 (LLGCQAPVGYAISLVMGGLLF). Residues 104–126 (AKKMREEGYITMLDPFQHKYGQR) lie on the Cytoplasmic side of the membrane. A helical membrane pass occupies residues 127–147 (IGGLMYVPALLGETFWTAAIL). Topologically, residues 148-165 (SALGATLSVILGIDMNAS) are extracellular. Residues 166-186 (VTLSACIAVFYTFTGGYYAVA) form a helical membrane-spanning segment. The Cytoplasmic portion of the chain corresponds to 187-192 (YTDVVQ). A helical membrane pass occupies residues 193–213 (LFCIFVGLWVCVPAAMVHDGA). Residues 214–233 (KDISRNAGDWIGEIGGFKET) lie on the Extracellular side of the membrane. The helical transmembrane segment at 234–254 (SLWIDCMLLLVFGGIPWQVYF) threads the bilayer. Residues 255–270 (QRVLSSKTAHGAQTLS) are Cytoplasmic-facing. A helical membrane pass occupies residues 271 to 291 (FVAGVGCILMAIPPALIGAIA). At 292-319 (RNTDWRMTDYSPWNNGTKVESIPPDKRN) the chain is on the extracellular side. N306 is a glycosylation site (N-linked (GlcNAc...) asparagine). Residues 320–340 (MVVPLVFQYLTPRWVAFIGLG) form a helical membrane-spanning segment. Over 341–378 (AVSAAVMSSADSSVLSAASMFAHNIWKLTIRPHASEKE) the chain is Cytoplasmic. Residues 379–399 (VIIVMRIAIICVGIMATIMAL) traverse the membrane as a helical segment. Residues 400 to 408 (TIQSIYGLW) are Extracellular-facing. Residues 409-429 (YLCADLVYVILFPQLLCVVYM) form a helical membrane-spanning segment. Residues 430 to 437 (PRSNTYGS) are Cytoplasmic-facing. Residues 438 to 458 (LAGYAVGLVLRLIGGEPLVSL) form a helical membrane-spanning segment. At 459–478 (PAFFHYPMYTDGVQYFPFRT) the chain is on the extracellular side. The helical transmembrane segment at 479–499 (TAMLSSMATIYIVSIQSEKLF) threads the bilayer. Residues 500 to 576 (KSGRLSPEWD…DQSYYSTNSN (77 aa)) are Cytoplasmic-facing. Residues 541-576 (APNGTPAPVHPNQQPSDENTLLHPYSDQSYYSTNSN) are disordered. The segment covering 566–576 (SDQSYYSTNSN) has biased composition (polar residues).

Belongs to the sodium:solute symporter (SSF) (TC 2.A.21) family. As to expression, detected in the nervous system, including the nerve ring and cholinergic motor neurons of the ventral nerve cord.

Its subcellular location is the membrane. Its function is as follows. Imports choline from the extracellular space to the neuron with high affinity. Choline uptake is the rate-limiting step in acetylcholine synthesis. Sodium ion and chloride ion dependent. This is High-affinity choline transporter 1 (cho-1) from Caenorhabditis elegans.